Consider the following 208-residue polypeptide: Large ribosomal subunit protein bL25 (208 aa).

Belongs to the bacterial ribosomal protein bL25 family. CTC subfamily. In terms of assembly, part of the 50S ribosomal subunit; part of the 5S rRNA/L5/L18/L25 subcomplex. Contacts the 5S rRNA. Binds to the 5S rRNA independently of L5 and L18.

In terms of biological role, this is one of the proteins that binds to the 5S RNA in the ribosome where it forms part of the central protuberance. In Paracoccus denitrificans (strain Pd 1222), this protein is Large ribosomal subunit protein bL25.